The primary structure comprises 281 residues: Bifunctional protein FolD (281 aa).

Residues 164–166, serine 189, and threonine 230 contribute to the NADP(+) site; that span reads GRS.

The protein belongs to the tetrahydrofolate dehydrogenase/cyclohydrolase family. As to quaternary structure, homodimer.

The enzyme catalyses (6R)-5,10-methylene-5,6,7,8-tetrahydrofolate + NADP(+) = (6R)-5,10-methenyltetrahydrofolate + NADPH. It catalyses the reaction (6R)-5,10-methenyltetrahydrofolate + H2O = (6R)-10-formyltetrahydrofolate + H(+). The protein operates within one-carbon metabolism; tetrahydrofolate interconversion. In terms of biological role, catalyzes the oxidation of 5,10-methylenetetrahydrofolate to 5,10-methenyltetrahydrofolate and then the hydrolysis of 5,10-methenyltetrahydrofolate to 10-formyltetrahydrofolate. This chain is Bifunctional protein FolD, found in Dictyoglomus turgidum (strain DSM 6724 / Z-1310).